The sequence spans 133 residues: Cytochrome c' (133 aa).

5 residues coordinate heme c: Arg-12, Thr-72, Cys-122, Cys-125, and His-126.

Post-translationally, binds 1 heme c group covalently per subunit.

In terms of biological role, cytochrome c' is the most widely occurring bacterial c-type cytochrome. Cytochromes c' are high-spin proteins and the heme has no sixth ligand. Their exact function is not known. This Rhodocyclus tenuis (Rhodospirillum tenue) protein is Cytochrome c'.